We begin with the raw amino-acid sequence, 46 residues long: Protein PsbN (46 aa).

A helical membrane pass occupies residues 10 to 30; the sequence is LIITILAVTIAFTAVSLYTAF.

The protein belongs to the PsbN family.

The protein resides in the cellular thylakoid membrane. May play a role in photosystem I and II biogenesis. The polypeptide is Protein PsbN (Acaryochloris marina (strain MBIC 11017)).